A 415-amino-acid chain; its full sequence is Histidine--tRNA ligase (415 aa).

This sequence belongs to the class-II aminoacyl-tRNA synthetase family. As to quaternary structure, homodimer.

It is found in the cytoplasm. It catalyses the reaction tRNA(His) + L-histidine + ATP = L-histidyl-tRNA(His) + AMP + diphosphate + H(+). The polypeptide is Histidine--tRNA ligase (Phytoplasma australiense).